The following is a 352-amino-acid chain: Photosystem II D2 protein (352 aa).

At T2 the chain carries N-acetylthreonine. T2 bears the Phosphothreonine mark. The chain crosses the membrane as a helical span at residues C40–T60. H117 contributes to the chlorophyll a binding site. The helical transmembrane segment at G124 to P140 threads the bilayer. 2 residues coordinate pheophytin a: Q129 and N142. The helical transmembrane segment at V152–A165 threads the bilayer. Residue H197 participates in chlorophyll a binding. The helical transmembrane segment at A207 to D227 threads the bilayer. The a plastoquinone site is built by H214 and F261. Fe cation is bound at residue H214. Residue H268 coordinates Fe cation. Residues G278–R294 form a helical membrane-spanning segment.

This sequence belongs to the reaction center PufL/M/PsbA/D family. PSII is composed of 1 copy each of membrane proteins PsbA, PsbB, PsbC, PsbD, PsbE, PsbF, PsbH, PsbI, PsbJ, PsbK, PsbL, PsbM, PsbT, PsbX, PsbY, PsbZ, Psb30/Ycf12, at least 3 peripheral proteins of the oxygen-evolving complex and a large number of cofactors. It forms dimeric complexes. The D1/D2 heterodimer binds P680, chlorophylls that are the primary electron donor of PSII, and subsequent electron acceptors. It shares a non-heme iron and each subunit binds pheophytin, quinone, additional chlorophylls, carotenoids and lipids. There is also a Cl(-1) ion associated with D1 and D2, which is required for oxygen evolution. The PSII complex binds additional chlorophylls, carotenoids and specific lipids. is required as a cofactor.

The protein localises to the plastid. The protein resides in the chloroplast thylakoid membrane. The catalysed reaction is 2 a plastoquinone + 4 hnu + 2 H2O = 2 a plastoquinol + O2. Functionally, photosystem II (PSII) is a light-driven water:plastoquinone oxidoreductase that uses light energy to abstract electrons from H(2)O, generating O(2) and a proton gradient subsequently used for ATP formation. It consists of a core antenna complex that captures photons, and an electron transfer chain that converts photonic excitation into a charge separation. The D1/D2 (PsbA/PsbD) reaction center heterodimer binds P680, the primary electron donor of PSII as well as several subsequent electron acceptors. D2 is needed for assembly of a stable PSII complex. The sequence is that of Photosystem II D2 protein from Tupiella akineta (Green alga).